A 329-amino-acid polypeptide reads, in one-letter code: MELHILEHRLQVASVAKESIPLFTYGLIKLAFLSSKTRCKFFSLTETPEDYTIIVDEEGFLELPSSEHLSVADATWLALNVVSGGGSFSSSQPIGVTKIAKSVIAPLADQNISVFMLSTYQTDFILVRERDLPFVTHTLSSEFTILRVVNGETVAAENLGITNGFVKPKLVQRPVIHPLSSPSNRFCVTSLDPDTLPAVATLLMDVMFYSNGVKDPMATGDDCGHIRFFSFSLIEGYISLVMDVQTQQRFPSNLLFTSASGELWKMVRIGGQPLGFDECGIVAQISEPLAAADIPAYYISTFKFDHALVPEENINGVISALKVSQAEKH.

2 consecutive ACT domains span residues Ala72–Ser140 and Glu262–Lys322.

The protein belongs to the GATS family. In terms of assembly, forms homodimers and heterodimers with CASTOR1. Interacts with the GATOR2 complex which is composed of MIOS, SEC13, SEH1L, WDR24 and WDR59; the interaction is not regulated by arginine. In terms of tissue distribution, widely expressed.

The protein localises to the cytoplasm. It is found in the cytosol. Functions as a negative regulator of the TORC1 signaling pathway through the GATOR complex. As part of homodimers or heterodimers with CASTOR1, directly binds and inhibits the GATOR subcomplex GATOR2 and thereby mTORC1. Does not directly bind arginine, but binding of arginine to CASTOR1 disrupts the interaction of CASTOR2-containing heterodimers with GATOR2 which can in turn activate mTORC1 and the TORC1 signaling pathway. This chain is Cytosolic arginine sensor for mTORC1 subunit 2, found in Homo sapiens (Human).